Reading from the N-terminus, the 510-residue chain is 2-isopropylmalate synthase (510 aa).

One can recognise a Pyruvate carboxyltransferase domain in the interval L5–V267. The Mn(2+) site is built by D14, H202, H204, and N238. A regulatory domain region spans residues R392–I510.

It belongs to the alpha-IPM synthase/homocitrate synthase family. LeuA type 1 subfamily. As to quaternary structure, homodimer. The cofactor is Mn(2+).

Its subcellular location is the cytoplasm. It carries out the reaction 3-methyl-2-oxobutanoate + acetyl-CoA + H2O = (2S)-2-isopropylmalate + CoA + H(+). Its pathway is amino-acid biosynthesis; L-leucine biosynthesis; L-leucine from 3-methyl-2-oxobutanoate: step 1/4. Catalyzes the condensation of the acetyl group of acetyl-CoA with 3-methyl-2-oxobutanoate (2-ketoisovalerate) to form 3-carboxy-3-hydroxy-4-methylpentanoate (2-isopropylmalate). The sequence is that of 2-isopropylmalate synthase from Nitrosomonas europaea (strain ATCC 19718 / CIP 103999 / KCTC 2705 / NBRC 14298).